The chain runs to 872 residues: Metabotropic glutamate receptor 2 (872 aa).

The first 18 residues, 1 to 18, serve as a signal peptide directing secretion; that stretch reads MESLLGFLALLLLWGAVA. The Extracellular segment spans residues 19-567; it reads EGPAKKVLTL…QEYIRWGDAW (549 aa). A disulfide bond links Cys50 and Cys92. L-glutamate contacts are provided by Arg57, Arg61, Ser145, Ala166, and Thr168. 2 N-linked (GlcNAc...) asparagine glycosylation sites follow: Asn203 and Asn286. 7 disulfides stabilise this stretch: Cys234–Cys518, Cys355–Cys362, Cys400–Cys407, Cys500–Cys519, Cys504–Cys522, Cys525–Cys537, and Cys540–Cys553. Asp295 is a binding site for L-glutamate. Residue Asn338 is glycosylated (N-linked (GlcNAc...) asparagine). Lys377 provides a ligand contact to L-glutamate. A glycan (N-linked (GlcNAc...) asparagine) is linked at Asn402. N-linked (GlcNAc...) asparagine glycosylation is present at Asn547. The helical transmembrane segment at 568–590 threads the bilayer; sequence AVGPVTIACLGALATLFVLGVFV. Residues 591–604 lie on the Cytoplasmic side of the membrane; sequence RHNATPVVKASGRE. A helical transmembrane segment spans residues 605–625; that stretch reads LCYILLGGVFLCYCMTFVFIA. At 626–636 the chain is on the extracellular side; sequence KPSTAVCTLRR. Cysteines 632 and 721 form a disulfide. A helical membrane pass occupies residues 637–655; sequence LGLGTAFSVCYSALLTKTN. The Cytoplasmic portion of the chain corresponds to 656–679; that stretch reads RIARIFGGAREGAQRPRFISPASQ. Residues 677 to 685 are important for interaction with HTR2A; it reads ASQVAICLA. Residues 680 to 700 traverse the membrane as a helical segment; sequence VAICLALISGQLLIVAAWLVV. Topologically, residues 701–725 are extracellular; the sequence is EAPGTGKETAPERREVVTLRCNHRD. A helical transmembrane segment spans residues 726 to 747; it reads ASMLGSLAYNVLLIALCTLYAF. Topologically, residues 748–760 are cytoplasmic; it reads KTRKCPENFNEAK. Residues 761-783 form a helical membrane-spanning segment; sequence FIGFTMYTTCIIWLAFLPIFYVT. Over 784-793 the chain is Extracellular; it reads SSDYRVQTTT. Residues 794–819 form a helical membrane-spanning segment; it reads MCVSVSLSGSVVLGCLFAPKLHIILF. At 820-872 the chain is on the cytoplasmic side; that stretch reads QPQKNVVSHRAPTSRFGSAAPRASANLGQGSGSQFVPTVCNGREVVDSTTSSL.

It belongs to the G-protein coupled receptor 3 family. As to quaternary structure, forms heterodimers with GRM3 or GRM4. Interacts with GNAI1. Interacts with TAMALIN. Interacts with HTR2A. As to expression, is widely distributed in the CNS and prominent expression is seen in Golgi cells of the cerebellum and some particular neuronal cells in other brain regions.

It is found in the cell membrane. The protein resides in the synapse. The protein localises to the cell projection. Its subcellular location is the dendrite. Dimeric G protein-coupled receptor which is activated by the excitatory neurotransmitter L-glutamate. Plays critical roles in modulating synaptic transmission and neuronal excitability. Upon activation by glutamate, inhibits presynaptic calcium channels, reducing further glutamate release and dampening excitatory signaling. Mechanistically, ligand binding causes a conformation change that triggers signaling via guanine nucleotide-binding proteins (G proteins) and modulates the activity of down-stream effectors, such as adenylate cyclase. May mediate suppression of neurotransmission or may be involved in synaptogenesis or synaptic stabilization. This Rattus norvegicus (Rat) protein is Metabotropic glutamate receptor 2 (Grm2).